The primary structure comprises 61 residues: Translational regulator CsrA (61 aa).

Belongs to the CsrA/RsmA family. Homodimer; the beta-strands of each monomer intercalate to form a hydrophobic core, while the alpha-helices form wings that extend away from the core.

Its subcellular location is the cytoplasm. Functionally, a key translational regulator that binds mRNA to regulate translation initiation and/or mRNA stability. Mediates global changes in gene expression, shifting from rapid growth to stress survival by linking envelope stress, the stringent response and the catabolite repression systems. Usually binds in the 5'-UTR; binding at or near the Shine-Dalgarno sequence prevents ribosome-binding, repressing translation, binding elsewhere in the 5'-UTR can activate translation and/or stabilize the mRNA. Its function is antagonized by small RNA(s). The protein is Translational regulator CsrA of Mannheimia succiniciproducens (strain KCTC 0769BP / MBEL55E).